We begin with the raw amino-acid sequence, 152 residues long: Transcriptional regulator MraZ (152 aa).

2 SpoVT-AbrB domains span residues 5-52 (ATLV…TLPE) and 81-124 (ASEC…DEQV).

The protein belongs to the MraZ family. In terms of assembly, forms oligomers.

It localises to the cytoplasm. The protein localises to the nucleoid. Functionally, negatively regulates its own expression and that of the subsequent genes in the proximal part of the division and cell wall (dcw) gene cluster. Acts by binding directly to DNA. May also regulate the expression of genes outside the dcw cluster. This Proteus mirabilis (strain HI4320) protein is Transcriptional regulator MraZ.